Consider the following 425-residue polypeptide: Multifunctional CCA protein (425 aa).

Gly8 and Arg11 together coordinate ATP. Positions 8 and 11 each coordinate CTP. Residues Glu21 and Asp23 each contribute to the Mg(2+) site. ATP contacts are provided by Arg91, Arg137, and Arg140. Arg91, Arg137, and Arg140 together coordinate CTP. The HD domain maps to 228-329; that stretch reads TGVHTLMVLD…VDLLDRLGAL (102 aa).

The protein belongs to the tRNA nucleotidyltransferase/poly(A) polymerase family. Bacterial CCA-adding enzyme type 1 subfamily. Monomer. Can also form homodimers and oligomers. The cofactor is Mg(2+). Ni(2+) is required as a cofactor.

It carries out the reaction a tRNA precursor + 2 CTP + ATP = a tRNA with a 3' CCA end + 3 diphosphate. The catalysed reaction is a tRNA with a 3' CCA end + 2 CTP + ATP = a tRNA with a 3' CCACCA end + 3 diphosphate. In terms of biological role, catalyzes the addition and repair of the essential 3'-terminal CCA sequence in tRNAs without using a nucleic acid template. Adds these three nucleotides in the order of C, C, and A to the tRNA nucleotide-73, using CTP and ATP as substrates and producing inorganic pyrophosphate. tRNA 3'-terminal CCA addition is required both for tRNA processing and repair. Also involved in tRNA surveillance by mediating tandem CCA addition to generate a CCACCA at the 3' terminus of unstable tRNAs. While stable tRNAs receive only 3'-terminal CCA, unstable tRNAs are marked with CCACCA and rapidly degraded. The protein is Multifunctional CCA protein of Methylococcus capsulatus (strain ATCC 33009 / NCIMB 11132 / Bath).